The sequence spans 78 residues: UPF0349 protein SAHV_0934 (78 aa).

This sequence belongs to the UPF0349 family.

This chain is UPF0349 protein SAHV_0934, found in Staphylococcus aureus (strain Mu3 / ATCC 700698).